The following is a 445-amino-acid chain: DNA repair protein RadA (445 aa).

Residues 10 to 27 (CSNCANISHKWSGQCFDC) form a C4-type zinc finger. Residue 90-97 (GEPGIGKS) participates in ATP binding. A RadA KNRFG motif motif is present at residues 249–253 (KNRFG). The interval 348 to 445 (EIYLSIAGGL…HLQDLKEIIK (98 aa)) is lon-protease-like.

Belongs to the RecA family. RadA subfamily.

Its function is as follows. DNA-dependent ATPase involved in processing of recombination intermediates, plays a role in repairing DNA breaks. Stimulates the branch migration of RecA-mediated strand transfer reactions, allowing the 3' invading strand to extend heteroduplex DNA faster. Binds ssDNA in the presence of ADP but not other nucleotides, has ATPase activity that is stimulated by ssDNA and various branched DNA structures, but inhibited by SSB. Does not have RecA's homology-searching function. In Rickettsia typhi (strain ATCC VR-144 / Wilmington), this protein is DNA repair protein RadA.